The sequence spans 198 residues: Dynactin subunit 5 (198 aa).

Residues 179–188 are compositionally biased toward polar residues; it reads NTPASKGLPS. The disordered stretch occupies residues 179-198; sequence NTPASKGLPSTPTKLQTTTT. Residues 189–198 are compositionally biased toward low complexity; it reads TPTKLQTTTT.

It belongs to the dynactin subunits 5/6 family. Dynactin subunit 5 subfamily. Member of the pointed-end complex of the dynactin shoulder complex.

The protein localises to the cytoplasm. The protein resides in the cytoskeleton. This is Dynactin subunit 5 (dynE) from Dictyostelium discoideum (Social amoeba).